A 561-amino-acid polypeptide reads, in one-letter code: Asparagine synthetase [glutamine-hydrolyzing] (561 aa).

The For GATase activity role is filled by C2. Residues 2 to 191 (CGIWALFGSD…PGHYEVLDLK (190 aa)) form the Glutamine amidotransferase type-2 domain. Residues 49–53 (RLAVV), 75–77 (NGE), and D97 contribute to the L-glutamine site. The region spanning 213–536 (HAIYDSVEKL…PGRADWLTHY (324 aa)) is the Asparagine synthetase domain. ATP contacts are provided by residues L256, I288, and 363-364 (SG). K385 bears the N6-acetyllysine mark. T545 carries the phosphothreonine modification. Phosphoserine is present on S557.

It catalyses the reaction L-aspartate + L-glutamine + ATP + H2O = L-asparagine + L-glutamate + AMP + diphosphate + H(+). The protein operates within amino-acid biosynthesis; L-asparagine biosynthesis; L-asparagine from L-aspartate (L-Gln route): step 1/1. This Mus musculus (Mouse) protein is Asparagine synthetase [glutamine-hydrolyzing] (Asns).